Reading from the N-terminus, the 456-residue chain is RuvB-like helicase 1 (456 aa).

70–77 (GPPGTGKT) is a binding site for ATP.

Belongs to the RuvB family. In terms of assembly, forms homohexameric rings. May form a dodecamer with rept made of two stacked hexameric rings. Component of the chromatin remodeling Ino80 complex.

The protein localises to the nucleus. The enzyme catalyses ATP + H2O = ADP + phosphate + H(+). Acts as a transcriptional coactivator in Wg signaling caused by altered arm signaling. Pont and rept interfere antagonistically with nuclear arm signaling function, and are required to enhance or reduce arm activity, respectively. Also an essential cofactor for the normal function of Myc; required for cellular proliferation and growth. In terms of biological role, proposed core component of the chromatin remodeling Ino80 complex which is involved in transcriptional regulation, DNA replication and probably DNA repair. The sequence is that of RuvB-like helicase 1 from Drosophila pseudoobscura pseudoobscura (Fruit fly).